We begin with the raw amino-acid sequence, 100 residues long: Large ribosomal subunit protein uL23 (100 aa).

It belongs to the universal ribosomal protein uL23 family. As to quaternary structure, part of the 50S ribosomal subunit. Contacts protein L29, and trigger factor when it is bound to the ribosome.

One of the early assembly proteins it binds 23S rRNA. One of the proteins that surrounds the polypeptide exit tunnel on the outside of the ribosome. Forms the main docking site for trigger factor binding to the ribosome. The chain is Large ribosomal subunit protein uL23 from Pasteurella multocida (strain Pm70).